The following is a 300-amino-acid chain: Inosose dehydratase (300 aa).

It belongs to the IolE/MocC family. Glutathione is required as a cofactor. Co(2+) serves as cofactor. It depends on Mn(2+) as a cofactor.

It catalyses the reaction scyllo-inosose = 3D-3,5/4-trihydroxycyclohexane-1,2-dione + H2O. Functionally, catalyzes the dehydration of inosose (2-keto-myo-inositol, 2KMI or 2,4,6/3,5-pentahydroxycyclohexanone) to 3D-(3,5/4)-trihydroxycyclohexane-1,2-dione (D-2,3-diketo-4-deoxy-epi-inositol). This is Inosose dehydratase from Mesomycoplasma hyopneumoniae (strain J / ATCC 25934 / NCTC 10110) (Mycoplasma hyopneumoniae).